Here is a 293-residue protein sequence, read N- to C-terminus: MNTDVAPVKSKTERKPKPKWLRVKLPTGKKYTELRNLVDKYDLHTICTSGSCPNMGECWSEGTATFMILGNVCTRSCGFCGVKTGRPETVDWDEPEKVARSIKLMQIKHAVVTSVDRDDLKDMGSIVWAETVKAIRRMNPETTLETLIPDFQGNERNIDRIIEVAPEVVSHNMETVKRLTREVRIQAKYDRSLAVLKYLKDNGIRRTKSGIMLGLGEQEEEVIQTLKDLREAGVDVVTIGQYLQPSKKHLPVKQFITPDQFQKYEKIGLELGFRHVESSALVRSSYKAQKHLN.

7 residues coordinate [4Fe-4S] cluster: Cys-47, Cys-52, Cys-58, Cys-73, Cys-77, Cys-80, and Ser-285. The 216-residue stretch at 59–274 (WSEGTATFMI…EKIGLELGFR (216 aa)) folds into the Radical SAM core domain.

It belongs to the radical SAM superfamily. Lipoyl synthase family. [4Fe-4S] cluster is required as a cofactor.

The protein localises to the cytoplasm. It carries out the reaction [[Fe-S] cluster scaffold protein carrying a second [4Fe-4S](2+) cluster] + N(6)-octanoyl-L-lysyl-[protein] + 2 oxidized [2Fe-2S]-[ferredoxin] + 2 S-adenosyl-L-methionine + 4 H(+) = [[Fe-S] cluster scaffold protein] + N(6)-[(R)-dihydrolipoyl]-L-lysyl-[protein] + 4 Fe(3+) + 2 hydrogen sulfide + 2 5'-deoxyadenosine + 2 L-methionine + 2 reduced [2Fe-2S]-[ferredoxin]. The protein operates within protein modification; protein lipoylation via endogenous pathway; protein N(6)-(lipoyl)lysine from octanoyl-[acyl-carrier-protein]: step 2/2. Functionally, catalyzes the radical-mediated insertion of two sulfur atoms into the C-6 and C-8 positions of the octanoyl moiety bound to the lipoyl domains of lipoate-dependent enzymes, thereby converting the octanoylated domains into lipoylated derivatives. This is Lipoyl synthase from Christiangramia forsetii (strain DSM 17595 / CGMCC 1.15422 / KT0803) (Gramella forsetii).